The primary structure comprises 709 residues: MEHTYQYSWIIPFVPLPIPIKIGMGLLLFPMATKNLRRMWAFPNILLLSIVMIFSVDLSIQQINRSSIYQYVWSWTINNDFSFEFGYFIDSLTSIMSILITTVGIFVLIYXDNYMSHDQGYLRFFAYMSLFNTSMLGLLTXSNLIQIYXFWELVGMCSYLLIGFWFTXPAAANACQKAFVTNRICDFGLSLXILRXYWITGXFEFQDLFEIFNNLIYNNEVHFLFVTLCASLLFAGAVAKSAQFPLHVWLPDAMEGPTPISALIHAATMVAAGIFLVPRLLPLFIVIPYIMNLISLIGIITVLLGATLALAQKDIKRGLAYSTMSQLGYMMLALGMGSYRAALFHLITHAYSKALLFLGSGSIIHSMEAIVGYSPDKSQNMVFMGGLRKHVPITQIAFLVGTLSLCGIPPLACFWSKDEILSDSWLYSPIFAIIAWSTAGLTASYXFRIYLLTFEGHXNIHFQNYSXKKXSSXYSIKLWGKEEQKMINRNFRLFPLLTMNNNEKPYRIGGNVKKVALITITNFGYKKAFSYPHESDNTMLFPMLILVLFTLFVGAIAIPFNQEGIHFDILSKLLTPSINLLHQNSNDFEDWYQFLTNATFSVSIASFGIFTAFLLYKPFYSSLQNLNLLNSFAKRGPKRIFLDKIIYLIYDWSYNRGYIDTFYSISLTKGIRGLAELTHFFDRRVIDGITNGVXITSFFVGEGIKYVGG.

Helical transmembrane passes span 9–29 (WIIPFVPLPIPIKIGMGLLLF), 40–60 (WAFPNILLLSIVMIFSVDLSI), 89–109 (IDSLTSIMSILITTVGIFVLI), 125–145 (FAYMSLFNTSMLGLLTXSNLI), 147–167 (IYXFWELVGMCSYLLIGFWFT), 219–239 (NEVHFLFVTLCASLLFAGAVA), 257–277 (PTPISALIHAATMVAAGIFLV), 280–300 (LLPLFIVIPYIMNLISLIGII), 327–347 (LGYMMLALGMGSYRAALFHLI), 354–374 (ALLFLGSGSIIHSMEAIVGYS), 396–416 (IAFLVGTLSLCGIPPLACFWS), 425–445 (WLYSPIFAIIAWSTAGLTASY), 540–560 (LFPMLILVLFTLFVGAIAIPF), and 594–614 (FLTNATFSVSIASFGIFTAFL).

This sequence belongs to the complex I subunit 5 family. In terms of assembly, NDH is composed of at least 16 different subunits, 5 of which are encoded in the nucleus.

Its subcellular location is the plastid. The protein resides in the chloroplast thylakoid membrane. The enzyme catalyses a plastoquinone + NADH + (n+1) H(+)(in) = a plastoquinol + NAD(+) + n H(+)(out). It catalyses the reaction a plastoquinone + NADPH + (n+1) H(+)(in) = a plastoquinol + NADP(+) + n H(+)(out). In terms of biological role, NDH shuttles electrons from NAD(P)H:plastoquinone, via FMN and iron-sulfur (Fe-S) centers, to quinones in the photosynthetic chain and possibly in a chloroplast respiratory chain. The immediate electron acceptor for the enzyme in this species is believed to be plastoquinone. Couples the redox reaction to proton translocation, and thus conserves the redox energy in a proton gradient. The chain is NAD(P)H-quinone oxidoreductase subunit 5, chloroplastic (ndhF) from Pachira aquatica (Guiana chestnut).